The sequence spans 134 residues: Small ribosomal subunit protein eS24A (134 aa).

S2 is subject to N-acetylserine. The segment at 100–134 (IQKVARQQRKQRKNRGKKVFGTGKRLAKRKSKQQD) is disordered. Basic residues-rich tracts occupy residues 105-117 (RQQR…RGKK) and 124-134 (RLAKRKSKQQD).

The protein belongs to the eukaryotic ribosomal protein eS24 family. Component of the small ribosomal subunit (SSU). Mature yeast ribosomes consist of a small (40S) and a large (60S) subunit. The 40S small subunit contains 1 molecule of ribosomal RNA (18S rRNA) and at least 33 different proteins. The large 60S subunit contains 3 rRNA molecules (25S, 5.8S and 5S rRNA) and at least 46 different proteins.

It is found in the cytoplasm. Its function is as follows. Component of the ribosome, a large ribonucleoprotein complex responsible for the synthesis of proteins in the cell. The small ribosomal subunit (SSU) binds messenger RNAs (mRNAs) and translates the encoded message by selecting cognate aminoacyl-transfer RNA (tRNA) molecules. The large subunit (LSU) contains the ribosomal catalytic site termed the peptidyl transferase center (PTC), which catalyzes the formation of peptide bonds, thereby polymerizing the amino acids delivered by tRNAs into a polypeptide chain. The nascent polypeptides leave the ribosome through a tunnel in the LSU and interact with protein factors that function in enzymatic processing, targeting, and the membrane insertion of nascent chains at the exit of the ribosomal tunnel. This Schizosaccharomyces pombe (strain 972 / ATCC 24843) (Fission yeast) protein is Small ribosomal subunit protein eS24A (rps2401).